Reading from the N-terminus, the 484-residue chain is NADH-quinone oxidoreductase subunit N (484 aa).

13 helical membrane passes run 10 to 30 (LALPEIWLLAATCGVLVVDLF), 40 to 60 (FYLTQGALLVTAVLALSTQWG), 74 to 94 (SLGAVVKASVALLSVLALAYT), 108 to 128 (FYLLALFANLGMLVIASGGSL), 129 to 149 (LSLYLGLELLSLALYALVAYH), 163 to 183 (FVLGSLASGILLYGMSMVYGA), 203 to 223 (LMLLFGVVFMLVGVAFKLGAA), 237 to 257 (PTPVTLFLSTAPKVAAVALFM), 272 to 292 (EPMLMILAVASLLVGNLIAIV), 299 to 319 (MLAYSAIAHAGFIMVGFTAGT), 327 to 347 (LFYTIAYSIMAAGAFGMITVL), 370 to 390 (YAGVLLLVLVSMTGIPGTVGF), and 404 to 424 (GHIPLAIFAVVAAVVGAFYYL).

The protein belongs to the complex I subunit 2 family. As to quaternary structure, NDH-1 is composed of 14 different subunits. Subunits NuoA, H, J, K, L, M, N constitute the membrane sector of the complex.

It localises to the cell inner membrane. The catalysed reaction is a quinone + NADH + 5 H(+)(in) = a quinol + NAD(+) + 4 H(+)(out). NDH-1 shuttles electrons from NADH, via FMN and iron-sulfur (Fe-S) centers, to quinones in the respiratory chain. The immediate electron acceptor for the enzyme in this species is believed to be ubiquinone. Couples the redox reaction to proton translocation (for every two electrons transferred, four hydrogen ions are translocated across the cytoplasmic membrane), and thus conserves the redox energy in a proton gradient. The sequence is that of NADH-quinone oxidoreductase subunit N from Halorhodospira halophila (strain DSM 244 / SL1) (Ectothiorhodospira halophila (strain DSM 244 / SL1)).